We begin with the raw amino-acid sequence, 638 residues long: Fructose-1,6-bisphosphatase class 3 (638 aa).

The protein belongs to the FBPase class 3 family. Mn(2+) serves as cofactor.

The catalysed reaction is beta-D-fructose 1,6-bisphosphate + H2O = beta-D-fructose 6-phosphate + phosphate. It functions in the pathway carbohydrate biosynthesis; gluconeogenesis. This is Fructose-1,6-bisphosphatase class 3 from Pediococcus pentosaceus (strain ATCC 25745 / CCUG 21536 / LMG 10740 / 183-1w).